Consider the following 243-residue polypeptide: MTDTPDTPDTPMATGASSRPPLRALTPLEGRVVAVLLEKQFTVPDTYPLSLNALAAGCNQKTARSPVMSVGEDEILTAIDGLKSLSLVFEGSSSRVPRFEQNLARVLGVPSQSAALLSTLLLRGPQTAAELRLNTARLHAFADISSVEAFLDELAERDPALVVKLPRGPGEREHRWTHLLCGEVSLAEAPGLRTSASIEIAPSELEALRISHRELEDKVARLQALVEEMAEQLGISIDPDRLS.

Positions 1 to 11 (MTDTPDTPDTP) are enriched in low complexity. A disordered region spans residues 1-23 (MTDTPDTPDTPMATGASSRPPLR).

The protein belongs to the UPF0502 family.

The protein is UPF0502 protein Rmet_3697 of Cupriavidus metallidurans (strain ATCC 43123 / DSM 2839 / NBRC 102507 / CH34) (Ralstonia metallidurans).